Consider the following 956-residue polypeptide: MPRVSAPLVLLPAWLVMVACSPHSLRIAAILDDPMECSRGERLSITLAKNRINRAPERLGKAKVEVDIFELLRDSEYETAETMCQILPKGVVAVLGPSSSPASSSIISNICGEKEVPHFKVAPEEFVKFQFQRFTTLNLHPSNTDISVAVAGILNFFNCTTACLICAKAECLLNLEKLLRQFLISKDTLSVRMLDDTRDPTPLLKEIRDDKTATIIIHANASMSHTILLKAAELGMVSAYYTYIFTNLEFSLQRMDSLVDDRVNILGFSIFNQSHAFFQEFAQSLNQSWQENCDHVPFTGPALSSALLFDAVYAVVTAVQELNRSQEIGVKPLSCGSAQIWQHGTSLMNYLRMVELEGLTGHIEFNSKGQRSNYALKILQFTRNGFRQIGQWHVAEGLSMDSHLYASNISDTLFNTTLVVTTILENPYLMLKGNHQEMEGNDRYEGFCVDMLKELAEILRFNYKIRLVGDGVYGVPEANGTWTGMVGELIARKADLAVAGLTITAEREKVIDFSKPFMTLGISILYRVHMGRKPGYFSFLDPFSPGVWLFMLLAYLAVSCVLFLVARLTPYEWYSPHPCAQGRCNLLVNQYSLGNSLWFPVGGFMQQGSTIAPRALSTRCVSGVWWAFTLIIISSYTANLAAFLTVQRMDVPIESVDDLADQTAIEYGTIHGGSSMTFFQNSRYQTYQRMWNYMYSKQPSVFVKSTEEGIARVLNSNYAFLLESTMNEYYRQRNCNLTQIGGLLDTKGYGIGMPVGSVFRDEFDLAILQLQENNRLEILKRKWWEGGKCPKEEDHRAKGLGMENIGGIFVVLICGLIVAIFMAMLEFLWTLRHSEATEVSVCQEMVTELRSIILCQDSIHPRRRRAAVPPPRPPIPEERRPRGTATLSNGKLCGAGEPDQLAQRLAQEAALVARGCTHIRVCPECRRFQGLRARPSPARSEESLEWEKTTNSSEPE.

The N-terminal stretch at 1 to 20 is a signal peptide; the sequence is MPRVSAPLVLLPAWLVMVAC. At 21–545 the chain is on the extracellular side; the sequence is SPHSLRIAAI…YFSFLDPFSP (525 aa). Residues N158, N220, N272, N286, N323, N408, N415, and N479 are each glycosylated (N-linked (GlcNAc...) asparagine). L-glutamate contacts are provided by G500, T502, and R507. The helical transmembrane segment at 546-566 threads the bilayer; it reads GVWLFMLLAYLAVSCVLFLVA. The Cytoplasmic segment spans residues 567 to 623; the sequence is RLTPYEWYSPHPCAQGRCNLLVNQYSLGNSLWFPVGGFMQQGSTIAPRALSTRCVSG. The chain crosses the membrane as a helical span at residues 624 to 644; the sequence is VWWAFTLIIISSYTANLAAFL. The Extracellular segment spans residues 645–804; sequence TVQRMDVPIE…HRAKGLGMEN (160 aa). L-glutamate is bound by residues S674, S675, and E723. N736 is a glycosylation site (N-linked (GlcNAc...) asparagine). A helical membrane pass occupies residues 805–825; the sequence is IGGIFVVLICGLIVAIFMAML. The Cytoplasmic portion of the chain corresponds to 826–956; it reads EFLWTLRHSE…EKTTNSSEPE (131 aa). Disordered stretches follow at residues 863-889 and 931-956; these read RRRA…TLSN and LRAR…SEPE. The segment covering 939–948 has biased composition (basic and acidic residues); it reads RSEESLEWEK.

Belongs to the glutamate-gated ion channel (TC 1.A.10.1) family. GRIK4 subfamily. As to quaternary structure, homodimer. Can form functional heteromeric receptors with GRIK1, GRIK2 and GRIK3.

It localises to the cell membrane. It is found in the postsynaptic cell membrane. The protein resides in the presynaptic cell membrane. In terms of biological role, ionotropic glutamate receptor that functions as a cation-permeable ligand-gated ion channel. Cannot form functional channels on its own. Shows channel activity only in heteromeric assembly with GRIK1, GRIK2 and GRIK3 subunits. In Homo sapiens (Human), this protein is Glutamate receptor ionotropic, kainate 4 (GRIK4).